We begin with the raw amino-acid sequence, 209 residues long: Uracil phosphoribosyltransferase (209 aa).

5-phospho-alpha-D-ribose 1-diphosphate is bound by residues Arg79, Arg104, and 131–139; that span reads DPMLATGGS. Residues Ile194 and 199–201 each bind uracil; that span reads GDA. Asp200 provides a ligand contact to 5-phospho-alpha-D-ribose 1-diphosphate.

Belongs to the UPRTase family. The cofactor is Mg(2+).

It catalyses the reaction UMP + diphosphate = 5-phospho-alpha-D-ribose 1-diphosphate + uracil. Its pathway is pyrimidine metabolism; UMP biosynthesis via salvage pathway; UMP from uracil: step 1/1. Allosterically activated by GTP. Functionally, catalyzes the conversion of uracil and 5-phospho-alpha-D-ribose 1-diphosphate (PRPP) to UMP and diphosphate. This chain is Uracil phosphoribosyltransferase, found in Natranaerobius thermophilus (strain ATCC BAA-1301 / DSM 18059 / JW/NM-WN-LF).